The primary structure comprises 110 residues: uncharacterized protein (110 aa).

Residues 1-26 form the signal peptide; that stretch reads MIRNVLLAFMICSGMTLLGGCSSVMS. Positions 87 to 110 are disordered; that stretch reads RVEKSEANAQATNAVIPPARMPDN.

This sequence to E.coli YceK.

This is an uncharacterized protein from Escherichia coli (strain K12).